Here is a 334-residue protein sequence, read N- to C-terminus: Dipeptide transport ATP-binding protein DppF (334 aa).

Residues 13–262 (LQAIDLKKHY…PRHPYTQALL (250 aa)) form the ABC transporter domain. Residue 55 to 62 (GESGCGKS) participates in ATP binding.

It belongs to the ABC transporter superfamily. As to quaternary structure, the complex is composed of two ATP-binding proteins (DppD and DppF), two transmembrane proteins (DppB and DppC) and a solute-binding protein (DppA). MppA can replace DppA as binding protein for heme and ALA transport.

The protein resides in the cell inner membrane. It catalyses the reaction a dipeptide(out) + ATP + H2O = a dipeptide(in) + ADP + phosphate + H(+). Part of the ABC transporter DppABCDF involved in dipeptide transport. Responsible for energy coupling to the transport system. Its function is as follows. When a foreign outer membrane heme receptor is expressed in E.coli, DppABCDF can also transport heme and its precursor, 5-aminolevulinic acid (ALA), from the periplasm into the cytoplasm. This Escherichia coli (strain K12) protein is Dipeptide transport ATP-binding protein DppF (dppF).